We begin with the raw amino-acid sequence, 277 residues long: Large ribosomal subunit protein uL2 (277 aa).

The interval Thr219–Lys277 is disordered. Positions Ala264 to Lys277 are enriched in basic and acidic residues.

The protein belongs to the universal ribosomal protein uL2 family. In terms of assembly, part of the 50S ribosomal subunit. Forms a bridge to the 30S subunit in the 70S ribosome.

Functionally, one of the primary rRNA binding proteins. Required for association of the 30S and 50S subunits to form the 70S ribosome, for tRNA binding and peptide bond formation. It has been suggested to have peptidyltransferase activity; this is somewhat controversial. Makes several contacts with the 16S rRNA in the 70S ribosome. This is Large ribosomal subunit protein uL2 from Streptococcus gordonii (strain Challis / ATCC 35105 / BCRC 15272 / CH1 / DL1 / V288).